A 93-amino-acid polypeptide reads, in one-letter code: Large ribosomal subunit protein uL23cz/uL23cy (93 aa).

Belongs to the universal ribosomal protein uL23 family. In terms of assembly, part of the 50S ribosomal subunit.

Its subcellular location is the plastid. The protein resides in the chloroplast. Its function is as follows. Binds to 23S rRNA. This is Large ribosomal subunit protein uL23cz/uL23cy (rpl23-A) from Lotus japonicus (Lotus corniculatus var. japonicus).